Here is a 1000-residue protein sequence, read N- to C-terminus: uncharacterized protein (1000 aa).

The span at 787–809 (RQYEKLKRQRAKSETERHQERHG) shows a compositional bias: basic and acidic residues. Residues 787-812 (RQYEKLKRQRAKSETERHQERHGKLS) are disordered.

This is an uncharacterized protein from Picosynechococcus sp. (strain ATCC 27264 / PCC 7002 / PR-6) (Agmenellum quadruplicatum).